Reading from the N-terminus, the 438-residue chain is 3-phosphoshikimate 1-carboxyvinyltransferase (438 aa).

3-phosphoshikimate-binding residues include Lys-25, Ser-26, and Arg-30. Residue Lys-25 coordinates phosphoenolpyruvate. The phosphoenolpyruvate site is built by Gly-99 and Arg-128. 3-phosphoshikimate-binding residues include Ser-173, Gln-175, Asp-325, and Lys-352. Phosphoenolpyruvate is bound at residue Gln-175. Asp-325 acts as the Proton acceptor in catalysis. Phosphoenolpyruvate-binding residues include Arg-356 and Arg-398.

The protein belongs to the EPSP synthase family. In terms of assembly, monomer.

Its subcellular location is the cytoplasm. The catalysed reaction is 3-phosphoshikimate + phosphoenolpyruvate = 5-O-(1-carboxyvinyl)-3-phosphoshikimate + phosphate. It functions in the pathway metabolic intermediate biosynthesis; chorismate biosynthesis; chorismate from D-erythrose 4-phosphate and phosphoenolpyruvate: step 6/7. Functionally, catalyzes the transfer of the enolpyruvyl moiety of phosphoenolpyruvate (PEP) to the 5-hydroxyl of shikimate-3-phosphate (S3P) to produce enolpyruvyl shikimate-3-phosphate and inorganic phosphate. The protein is 3-phosphoshikimate 1-carboxyvinyltransferase of Prochlorococcus marinus (strain MIT 9515).